The chain runs to 259 residues: Ubiquinone/menaquinone biosynthesis C-methyltransferase UbiE (259 aa).

Residues T82, D103, 131–132 (NA), and S148 contribute to the S-adenosyl-L-methionine site.

This sequence belongs to the class I-like SAM-binding methyltransferase superfamily. MenG/UbiE family.

It catalyses the reaction a 2-demethylmenaquinol + S-adenosyl-L-methionine = a menaquinol + S-adenosyl-L-homocysteine + H(+). The catalysed reaction is a 2-methoxy-6-(all-trans-polyprenyl)benzene-1,4-diol + S-adenosyl-L-methionine = a 5-methoxy-2-methyl-3-(all-trans-polyprenyl)benzene-1,4-diol + S-adenosyl-L-homocysteine + H(+). The protein operates within quinol/quinone metabolism; menaquinone biosynthesis; menaquinol from 1,4-dihydroxy-2-naphthoate: step 2/2. It participates in cofactor biosynthesis; ubiquinone biosynthesis. Functionally, methyltransferase required for the conversion of demethylmenaquinol (DMKH2) to menaquinol (MKH2) and the conversion of 2-polyprenyl-6-methoxy-1,4-benzoquinol (DDMQH2) to 2-polyprenyl-3-methyl-6-methoxy-1,4-benzoquinol (DMQH2). The protein is Ubiquinone/menaquinone biosynthesis C-methyltransferase UbiE of Haemophilus ducreyi (strain 35000HP / ATCC 700724).